Consider the following 69-residue polypeptide: Large ribosomal subunit protein uL29 (69 aa).

The protein belongs to the universal ribosomal protein uL29 family.

In Staphylococcus saprophyticus subsp. saprophyticus (strain ATCC 15305 / DSM 20229 / NCIMB 8711 / NCTC 7292 / S-41), this protein is Large ribosomal subunit protein uL29.